We begin with the raw amino-acid sequence, 693 residues long: MADVFESLELLFDRPNEPLITPKGENNSVFQLTEQFLTEDYANNGIELNNRFGDDASEKIPLKNLSKLPEFKIATQLPKDAEFSLFLPKHQEMANELLGVLMDVPENELQDLLSTCAFARVNLNPQLFNYCYSVALMHRRDTRKVRVKNFAEVFPSKFLDSQVFTQARETAAVIPPDVPRIPIIIPRDYTATDLEEEHRLAYWREDIGINLHHYHWHLVYPFTANDLSIVAKDRRGELFFYMHQQVIARFNCERLCNSLKRVKKFSNWREPIPEAYFPKLDSLTSSRGWPPRQSGMQWQDLNRAAEGLFVTIDEMERWRRNVEEAIATGTVRLPNGQTRPLDIDTLGNMLESSALSPNRELYGSIHNNGHSFTAYMHDPEHRYLEQFGVIADEATTMRDPFFYRWHAYIDDVFQKHKESAYVRPYTRSELENPGVQVRSVSVETPGGQPNTLNTFWMLSDVNLSRGLDFSDNGPVYARFTHLNYRHFSYRINVNNTGSSRRTTVRIFITPKFDERNVPWIFSDQRKMCIEMDRFVTVLNAGENNIVRQSTESSITIPFEQTFRDLSAQGNDPRRDELATFNYCGCGWPQHMLVPKGTEAGMPFQLFVMLSNYDLDRIDQDDGKQLTCVEASSFCGLKDKKYPDRRAMGFPFDRPSSSATSLQDFILPNMGLQDITIQLQNVTEPNPRNPPMSV.

A propeptide spanning residues 1–51 is cleaved from the precursor; that stretch reads MADVFESLELLFDRPNEPLITPKGENNSVFQLTEQFLTEDYANNGIELNNR. Residues Asn26 and Asn64 are each glycosylated (N-linked (GlcNAc...) asparagine). His213, His217, and His243 together coordinate Cu cation. Glu351 serves as the catalytic Proton acceptor. Cu cation-binding residues include His366, His370, and His406. 2 N-linked (GlcNAc...) asparagine glycosylation sites follow: Asn462 and Asn494. 2 cysteine pairs are disulfide-bonded: Cys583/Cys627 and Cys585/Cys634. Residue Asn680 is glycosylated (N-linked (GlcNAc...) asparagine).

As to quaternary structure, heterodimer. It depends on Cu(2+) as a cofactor. The N-terminus is blocked. As to expression, synthesized by hemocytes and released into the hemolymph plasma.

It localises to the secreted. The catalysed reaction is 2 L-dopa + O2 = 2 L-dopaquinone + 2 H2O. It catalyses the reaction L-tyrosine + O2 = L-dopaquinone + H2O. Functionally, this is a copper-containing oxidase that functions in the formation of pigments such as melanins and other polyphenolic compounds. Catalyzes the rate-limiting conversions of tyrosine to DOPA, DOPA to DOPA-quinone and possibly 5,6 dihydroxyindole to indole-5'6 quinone. This is Phenoloxidase subunit 2 from Bombyx mori (Silk moth).